We begin with the raw amino-acid sequence, 820 residues long: Cation/H(+) antiporter 17 (820 aa).

Helical transmembrane passes span 30–50 (LPLL…LAFL), 58–75 (RVIA…SALG), 90–110 (LTVL…LVGL), 124–144 (ALSI…GTSF), 159–179 (FLVF…ARIL), 192–212 (IALS…ALAV), 222–242 (LTSL…IFVV), 276–296 (FVTD…GVIF), 313–333 (LVSG…TNVA), 342–362 (GLLV…TVLV), 374–394 (LALG…LNIG), and 404–424 (IFAI…PLVL). 2 positions are modified to phosphoserine: Ser-817 and Ser-819.

Belongs to the monovalent cation:proton antiporter 2 (CPA2) transporter (TC 2.A.37) family. CHX (TC 2.A.37.4) subfamily. In terms of tissue distribution, predominantly expressed in epidermal and cortical cells of mature roots but also barely detected in leaves.

The protein localises to the membrane. Its function is as follows. Operates as a K(+)/H(+) antiporter that controls K(+) acquisition and homeostasis. This chain is Cation/H(+) antiporter 17 (CHX17), found in Arabidopsis thaliana (Mouse-ear cress).